We begin with the raw amino-acid sequence, 424 residues long: UPF0415 protein C7orf25 homolog (424 aa).

It belongs to the UPF0415 family.

In Xenopus laevis (African clawed frog), this protein is UPF0415 protein C7orf25 homolog.